The chain runs to 737 residues: Probable beta-glucosidase L (737 aa).

Positions 1–19 (MRSLIRSGALNAFLAASLA) are cleaved as a signal peptide. Residue Asn-225 is glycosylated (N-linked (GlcNAc...) asparagine). Asp-253 is a catalytic residue. Asn-340, Asn-365, and Asn-608 each carry an N-linked (GlcNAc...) asparagine glycan.

Belongs to the glycosyl hydrolase 3 family.

Its subcellular location is the secreted. The enzyme catalyses Hydrolysis of terminal, non-reducing beta-D-glucosyl residues with release of beta-D-glucose.. The protein operates within glycan metabolism; cellulose degradation. Its function is as follows. Beta-glucosidases are one of a number of cellulolytic enzymes involved in the degradation of cellulosic biomass. Catalyzes the last step releasing glucose from the inhibitory cellobiose. This is Probable beta-glucosidase L (bglL) from Emericella nidulans (strain FGSC A4 / ATCC 38163 / CBS 112.46 / NRRL 194 / M139) (Aspergillus nidulans).